The sequence spans 632 residues: Probable extracellular metalloproteinase 2 (632 aa).

The first 19 residues, 1–19, serve as a signal peptide directing secretion; the sequence is MHGLLLAGLAAALPLGVAG. Positions 20-244 are excised as a propeptide; sequence LPARQQSGLS…VHNVVDYVAS (225 aa). Residues N81 and N270 are each glycosylated (N-linked (GlcNAc...) asparagine). H429 contacts Zn(2+). Residue E430 is part of the active site. H433 is a binding site for Zn(2+).

The protein belongs to the peptidase M36 family. Requires Zn(2+) as cofactor.

The protein resides in the secreted. Secreted metalloproteinase probably acting as a virulence factor. This is Probable extracellular metalloproteinase 2 (MEP2) from Arthroderma benhamiae (strain ATCC MYA-4681 / CBS 112371) (Trichophyton mentagrophytes).